Consider the following 83-residue polypeptide: Mu-theraphotoxin-Hhn2j 3 (83 aa).

A signal peptide spans Met1–Ala21. A propeptide spanning residues Ser22–Arg48 is cleaved from the precursor. 3 cysteine pairs are disulfide-bonded: Cys50–Cys65, Cys57–Cys70, and Cys64–Cys77. A Leucine amide modification is found at Leu81.

This sequence belongs to the neurotoxin 10 (Hwtx-1) family. 15 (Hntx-3) subfamily. In terms of assembly, monomer. As to expression, expressed by the venom gland.

It is found in the secreted. Its function is as follows. Lethal neurotoxin. Selectively blocks tetrodotoxin-sensitive voltage-gated sodium channels (Nav). Does not affect tetrodotoxin-resistant voltage-gated sodium channels or calcium channels. The protein is Mu-theraphotoxin-Hhn2j 3 of Cyriopagopus hainanus (Chinese bird spider).